Reading from the N-terminus, the 245-residue chain is Adenosylcobinamide-GDP ribazoletransferase (245 aa).

5 helical membrane-spanning segments follow: residues 35–55 (WFPL…ALGL), 108–128 (IGAF…IGAH), 137–157 (GVLI…AALV), 176–196 (IAIG…TPAI), and 197–217 (TTVT…HLAR).

It belongs to the CobS family. Mg(2+) serves as cofactor.

Its subcellular location is the cell inner membrane. It catalyses the reaction alpha-ribazole + adenosylcob(III)inamide-GDP = adenosylcob(III)alamin + GMP + H(+). The enzyme catalyses alpha-ribazole 5'-phosphate + adenosylcob(III)inamide-GDP = adenosylcob(III)alamin 5'-phosphate + GMP + H(+). The protein operates within cofactor biosynthesis; adenosylcobalamin biosynthesis; adenosylcobalamin from cob(II)yrinate a,c-diamide: step 7/7. Its function is as follows. Joins adenosylcobinamide-GDP and alpha-ribazole to generate adenosylcobalamin (Ado-cobalamin). Also synthesizes adenosylcobalamin 5'-phosphate from adenosylcobinamide-GDP and alpha-ribazole 5'-phosphate. The protein is Adenosylcobinamide-GDP ribazoletransferase of Nitratidesulfovibrio vulgaris (strain ATCC 29579 / DSM 644 / CCUG 34227 / NCIMB 8303 / VKM B-1760 / Hildenborough) (Desulfovibrio vulgaris).